Here is a 551-residue protein sequence, read N- to C-terminus: Palmdelphin (551 aa).

N-acetylmethionine is present on M1. The stretch at 12 to 106 forms a coiled coil; that stretch reads QAITDKRKIQ…LQISANEEVI (95 aa). A Glycyl lysine isopeptide (Lys-Gly) (interchain with G-Cter in SUMO2) cross-link involves residue K125. A phosphoserine mark is found at S135 and S163. Residue K178 forms a Glycyl lysine isopeptide (Lys-Gly) (interchain with G-Cter in SUMO1); alternate linkage. Residue K178 forms a Glycyl lysine isopeptide (Lys-Gly) (interchain with G-Cter in SUMO2); alternate linkage. Basic and acidic residues predominate over residues 247-258; that stretch reads ERNSKSPTEYHE. The disordered stretch occupies residues 247–267; the sequence is ERNSKSPTEYHEPVYANPFCR. Phosphothreonine is present on T270. Disordered stretches follow at residues 298–387 and 452–536; these read HESE…CSSP and EDDE…DPSL. Phosphoserine is present on residues S322, S350, S371, S376, S385, and S386. Over residues 484 to 495 the composition is skewed to basic and acidic residues; sequence KRSEVSPHENTN. A phosphoserine mark is found at S498, S515, and S520.

Belongs to the paralemmin family. As to quaternary structure, interacts with GLUL. In terms of processing, phosphorylated. Expressed in the brain and the spinal cord. Expressed in the anterior olfactory nucleus, the olfactory tubercle, the nucleus supraopticus, the nucleus of the lateral olfactory tract, the piriform cortex, the cortico-amygdaloid transition zone, the septofimbrial nucleus and the indusium griseum (at protein level).

The protein resides in the cytoplasm. It localises to the cell projection. It is found in the dendrite. Its subcellular location is the dendritic spine. In Rattus norvegicus (Rat), this protein is Palmdelphin (Palmd).